Reading from the N-terminus, the 356-residue chain is sn-glycerol-3-phosphate import ATP-binding protein UgpC (356 aa).

Positions 4–235 (LKLQAVTKSW…PASLFVASFI (232 aa)) constitute an ABC transporter domain. Position 37–44 (37–44 (GPSGCGKS)) interacts with ATP.

This sequence belongs to the ABC transporter superfamily. sn-glycerol-3-phosphate importer (TC 3.A.1.1.3) family. In terms of assembly, the complex is composed of two ATP-binding proteins (UgpC), two transmembrane proteins (UgpA and UgpE) and a solute-binding protein (UgpB).

It localises to the cell inner membrane. The catalysed reaction is sn-glycerol 3-phosphate(out) + ATP + H2O = sn-glycerol 3-phosphate(in) + ADP + phosphate + H(+). Functionally, part of the ABC transporter complex UgpBAEC involved in sn-glycerol-3-phosphate (G3P) import. Responsible for energy coupling to the transport system. The sequence is that of sn-glycerol-3-phosphate import ATP-binding protein UgpC from Escherichia coli O157:H7.